A 474-amino-acid chain; its full sequence is Aspartyl/glutamyl-tRNA(Asn/Gln) amidotransferase subunit B (474 aa).

The protein belongs to the GatB/GatE family. GatB subfamily. In terms of assembly, heterotrimer of A, B and C subunits.

It carries out the reaction L-glutamyl-tRNA(Gln) + L-glutamine + ATP + H2O = L-glutaminyl-tRNA(Gln) + L-glutamate + ADP + phosphate + H(+). The catalysed reaction is L-aspartyl-tRNA(Asn) + L-glutamine + ATP + H2O = L-asparaginyl-tRNA(Asn) + L-glutamate + ADP + phosphate + 2 H(+). Allows the formation of correctly charged Asn-tRNA(Asn) or Gln-tRNA(Gln) through the transamidation of misacylated Asp-tRNA(Asn) or Glu-tRNA(Gln) in organisms which lack either or both of asparaginyl-tRNA or glutaminyl-tRNA synthetases. The reaction takes place in the presence of glutamine and ATP through an activated phospho-Asp-tRNA(Asn) or phospho-Glu-tRNA(Gln). The polypeptide is Aspartyl/glutamyl-tRNA(Asn/Gln) amidotransferase subunit B (Persephonella marina (strain DSM 14350 / EX-H1)).